An 827-amino-acid polypeptide reads, in one-letter code: Periplasmic nitrate reductase (827 aa).

Positions 1 to 32 (MELSRRDFMKANAAVAAAAAAGIVLPVKNVQA) form a signal peptide, tat-type signal. The 4Fe-4S Mo/W bis-MGD-type domain occupies 37–93 (IKWDKAPCRFCGTGCSVLVGTKDGRVVATQGDPDAEVNRGLNCIKGYFLSKIMYGAD). The [4Fe-4S] cluster site is built by Cys-44, Cys-47, Cys-51, and Cys-79. Mo-bis(molybdopterin guanine dinucleotide) is bound by residues Lys-81, Gln-148, Asn-173, Cys-177, 210–217 (WGSNMAEM), 241–245 (STFEH), Met-371, Gln-375, Asn-481, 507–508 (SD), Lys-530, Asp-557, and 717–726 (TGRVLEHWHT). Residue Phe-793 coordinates substrate. 2 residues coordinate Mo-bis(molybdopterin guanine dinucleotide): Asn-801 and Lys-818.

It belongs to the prokaryotic molybdopterin-containing oxidoreductase family. NasA/NapA/NarB subfamily. In terms of assembly, component of the periplasmic nitrate reductase NapAB complex composed of NapA and NapB. Requires [4Fe-4S] cluster as cofactor. It depends on Mo-bis(molybdopterin guanine dinucleotide) as a cofactor. Predicted to be exported by the Tat system. The position of the signal peptide cleavage has not been experimentally proven.

It is found in the periplasm. It carries out the reaction 2 Fe(II)-[cytochrome] + nitrate + 2 H(+) = 2 Fe(III)-[cytochrome] + nitrite + H2O. Catalytic subunit of the periplasmic nitrate reductase complex NapAB. Receives electrons from NapB and catalyzes the reduction of nitrate to nitrite. The polypeptide is Periplasmic nitrate reductase (Haemophilus ducreyi (strain 35000HP / ATCC 700724)).